We begin with the raw amino-acid sequence, 367 residues long: Probable cysteine protease RD19D (367 aa).

An N-terminal signal peptide occupies residues 1–22 (MVAKALAQLITCIILFCHVVAS). Positions 23–136 (VEDLTIRQVT…AEAPMVEVDG (114 aa)) are cleaved as a propeptide — activation peptide. Asn-61 carries N-linked (GlcNAc...) asparagine glycosylation. 2 disulfide bridges follow: Cys-158–Cys-208 and Cys-192–Cys-241. The active site involves Cys-161. Asn-254 carries an N-linked (GlcNAc...) asparagine glycan. Cys-297 and Cys-352 are oxidised to a cystine. Residues His-304 and Asn-331 contribute to the active site.

It belongs to the peptidase C1 family.

Its function is as follows. Probable thiol protease. This Arabidopsis thaliana (Mouse-ear cress) protein is Probable cysteine protease RD19D.